The following is a 212-amino-acid chain: Large ribosomal subunit protein uL3 (212 aa).

Gln153 is modified (N5-methylglutamine).

This sequence belongs to the universal ribosomal protein uL3 family. In terms of assembly, part of the 50S ribosomal subunit. Forms a cluster with proteins L14 and L19. In terms of processing, methylated by PrmB.

One of the primary rRNA binding proteins, it binds directly near the 3'-end of the 23S rRNA, where it nucleates assembly of the 50S subunit. The chain is Large ribosomal subunit protein uL3 from Shewanella woodyi (strain ATCC 51908 / MS32).